The sequence spans 154 residues: Superoxide dismutase [Cu-Zn] (154 aa).

A Glycyl lysine isopeptide (Lys-Gly) (interchain with G-Cter in SUMO) cross-link involves residue Lys-19. Ser-26 and Ser-39 each carry phosphoserine. A Zn(2+)-binding site is contributed by Glu-43. The Cu cation site is built by His-47, His-49, and His-64. Cys-58 and Cys-147 are disulfide-bonded. His-64 is a binding site for Zn(2+). A Glycyl lysine isopeptide (Lys-Gly) (interchain with G-Cter in SUMO) cross-link involves residue Lys-70. Residues His-72, His-81, and Asp-84 each coordinate Zn(2+). Phosphoserine is present on residues Ser-99 and Ser-117. His-121 contacts Cu cation. Phosphothreonine occurs at positions 132 and 138. Arg-144 is a substrate binding site.

The protein belongs to the Cu-Zn superoxide dismutase family. In terms of assembly, homodimer in holo form. In apo form, heterodimer with CCS1. Zinc-binding at 'His-16' of CCS1 and Glu-43 of apo-SOD1 is required for this heterodimerization. It depends on Cu cation as a cofactor. Requires Zn(2+) as cofactor.

It localises to the cytoplasm. Its subcellular location is the mitochondrion intermembrane space. It catalyses the reaction 2 superoxide + 2 H(+) = H2O2 + O2. Destroys radicals which are normally produced within the cells and which are toxic to biological systems. The chain is Superoxide dismutase [Cu-Zn] from Saccharomyces cerevisiae (strain ATCC 204508 / S288c) (Baker's yeast).